Consider the following 142-residue polypeptide: Probable transport accessory protein MmpS1 (142 aa).

The next 2 helical transmembrane spans lie at 8–28 and 81–101; these read FWIP…VSRL and VVNA…AVVA.

Belongs to the MmpS family.

It localises to the cell membrane. The protein is Probable transport accessory protein MmpS1 (mmpS1) of Mycobacterium bovis (strain ATCC BAA-935 / AF2122/97).